Reading from the N-terminus, the 1198-residue chain is Tetratricopeptide repeat protein 17 (1198 aa).

Residues 295–328 (FTSYYTLGNIYAMLGEYNHSVLCYDHALQAKPGF) form a TPR 1 repeat. Positions 340–382 (CQQKLEQKLEAQHRSLQRTLNELKEYQKQHDHYLRQQEILEKH) form a coiled coil. TPR repeat units follow at residues 619–652 (WLIL…APVQ) and 689–722 (PLTF…STKC). Disordered regions lie at residues 774–793 (LDAA…PVLS) and 902–954 (VKKP…YQSL). Basic residues predominate over residues 902–914 (VKKPKGDHKKPPG). TPR repeat units follow at residues 1071-1105 (SWVL…APHQ), 1108-1141 (DVPL…APHF), and 1142-1175 (AVNH…QPEF).

The protein belongs to the TTC17 family. As to quaternary structure, interacts with CATIP.

The protein localises to the cytoplasm. The protein resides in the cell membrane. Its subcellular location is the cytoskeleton. Its function is as follows. Plays a role in primary ciliogenesis by modulating actin polymerization. The sequence is that of Tetratricopeptide repeat protein 17 (Ttc17) from Mus musculus (Mouse).